Here is a 343-residue protein sequence, read N- to C-terminus: Protein RecA (343 aa).

Residue 66–73 (GPESSGKT) coordinates ATP.

It belongs to the RecA family.

The protein resides in the cytoplasm. Can catalyze the hydrolysis of ATP in the presence of single-stranded DNA, the ATP-dependent uptake of single-stranded DNA by duplex DNA, and the ATP-dependent hybridization of homologous single-stranded DNAs. It interacts with LexA causing its activation and leading to its autocatalytic cleavage. The sequence is that of Protein RecA from Nitrosomonas eutropha (strain DSM 101675 / C91 / Nm57).